Consider the following 316-residue polypeptide: Olfactory receptor 2G6 (316 aa).

The Extracellular segment spans residues 1–25 (MEETNNSSEKGFLLLGFSDQPQLER). 2 N-linked (GlcNAc...) asparagine glycosylation sites follow: Asn5 and Asn6. Residues 26–49 (FLFAIILYFYVLSLLGNTALILVC) form a helical membrane-spanning segment. At 50–57 (CLDSRLHT) the chain is on the cytoplasmic side. A helical transmembrane segment spans residues 58 to 79 (PMYFFLSNLSCVDICFTTSVAP). The Extracellular portion of the chain corresponds to 80-100 (QLLVTMNKKDKTMSYGGCVAQ). Cysteines 97 and 189 form a disulfide. The chain crosses the membrane as a helical span at residues 101–120 (LYVAMGLGSSECILLAVMAY). Residues 121–139 (DRYAAVCRPLRYIAIMHPR) lie on the Cytoplasmic side of the membrane. A helical membrane pass occupies residues 140–158 (FCASLAGGAWLSGLITSLI). Over 159–195 (QCSLTVQLPLCGHRTLDHIFCEVPVLIKLACVDTTFN) the chain is Extracellular. Residues 196–219 (EAELFVASVVFLIVPVLLILVSYG) form a helical membrane-spanning segment. Residues 220–236 (FITQAVLRIKSAAGRQK) lie on the Cytoplasmic side of the membrane. A helical transmembrane segment spans residues 237–259 (AFGTCSSHLVVVIIFYGTIIFMY). The Extracellular portion of the chain corresponds to 260–272 (LQPANRRSKNQGK). The chain crosses the membrane as a helical span at residues 273–292 (FVSLFYTIVTPLLNPIIYTL). Topologically, residues 293–316 (RNKDVKGALRTLILGSAAGQSHKD) are cytoplasmic.

It belongs to the G-protein coupled receptor 1 family.

The protein resides in the cell membrane. Functionally, odorant receptor. The sequence is that of Olfactory receptor 2G6 (OR2G6) from Homo sapiens (Human).